Here is a 513-residue protein sequence, read N- to C-terminus: ATP synthase subunit alpha (513 aa).

169-176 is a binding site for ATP; that stretch reads GDRQTGKT.

Belongs to the ATPase alpha/beta chains family. In terms of assembly, F-type ATPases have 2 components, CF(1) - the catalytic core - and CF(0) - the membrane proton channel. CF(1) has five subunits: alpha(3), beta(3), gamma(1), delta(1), epsilon(1). CF(0) has three main subunits: a(1), b(2) and c(9-12). The alpha and beta chains form an alternating ring which encloses part of the gamma chain. CF(1) is attached to CF(0) by a central stalk formed by the gamma and epsilon chains, while a peripheral stalk is formed by the delta and b chains.

It localises to the cell inner membrane. It catalyses the reaction ATP + H2O + 4 H(+)(in) = ADP + phosphate + 5 H(+)(out). Produces ATP from ADP in the presence of a proton gradient across the membrane. The alpha chain is a regulatory subunit. The sequence is that of ATP synthase subunit alpha from Yersinia pseudotuberculosis serotype O:1b (strain IP 31758).